Reading from the N-terminus, the 308-residue chain is Olfactory receptor 13H1 (308 aa).

Topologically, residues 1–25 (MAMDNVTAVFQFLLIGISNYPQWRD) are extracellular. The N-linked (GlcNAc...) asparagine glycan is linked to N5. The chain crosses the membrane as a helical span at residues 26 to 46 (TFFTLVLIIYLSTLLGNGFMI). Topologically, residues 47–54 (FLIHFDPN) are cytoplasmic. A helical membrane pass occupies residues 55 to 75 (LHTPIYFFLSNLSFLDLCYGT). The Extracellular segment spans residues 76–99 (ASMPQALVHCFSTHPYLSYPRCLA). C97 and C188 are joined by a disulfide. Residues 100–120 (QTSVSLALATAECLLLAAMAY) form a helical membrane-spanning segment. Topologically, residues 121-139 (DRVVAISNPLRYSVVMNGP) are cytoplasmic. The chain crosses the membrane as a helical span at residues 140–159 (VCVCLVATSWGTSLVLTAML). Residues 160 to 196 (ILSLRLHFCGANVINHFACEILSLIKLTCSDTSLNEF) lie on the Extracellular side of the membrane. A helical membrane pass occupies residues 197–216 (MILITSIFTLLLPFGFVLLS). The Cytoplasmic portion of the chain corresponds to 217 to 236 (YIRIAMAIIRIRSLQGRLKA). The helical transmembrane segment at 237–257 (FTTCGSHLTVVTIFYGSAISM) threads the bilayer. Residues 258 to 270 (YMKTQSKSYPDQD) lie on the Extracellular side of the membrane. The chain crosses the membrane as a helical span at residues 271–291 (KFISVFYGALTPMLNPLIYSL). Residues 292 to 308 (RKKDVKRAIRKVMLKRT) are Cytoplasmic-facing.

It belongs to the G-protein coupled receptor 1 family.

It is found in the cell membrane. Its function is as follows. Odorant receptor. This Homo sapiens (Human) protein is Olfactory receptor 13H1 (OR13H1).